The sequence spans 458 residues: Argininosuccinate lyase (458 aa).

Belongs to the lyase 1 family. Argininosuccinate lyase subfamily.

The protein resides in the cytoplasm. It catalyses the reaction 2-(N(omega)-L-arginino)succinate = fumarate + L-arginine. It participates in amino-acid biosynthesis; L-arginine biosynthesis; L-arginine from L-ornithine and carbamoyl phosphate: step 3/3. The protein is Argininosuccinate lyase of Anoxybacillus flavithermus (strain DSM 21510 / WK1).